The sequence spans 40 residues: Photosystem II reaction center protein J (40 aa).

A helical membrane pass occupies residues 8-28; sequence IPLWIIGTVTGIIVIGLIGIF.

It belongs to the PsbJ family. As to quaternary structure, PSII is composed of 1 copy each of membrane proteins PsbA, PsbB, PsbC, PsbD, PsbE, PsbF, PsbH, PsbI, PsbJ, PsbK, PsbL, PsbM, PsbT, PsbX, PsbY, PsbZ, Psb30/Ycf12, at least 3 peripheral proteins of the oxygen-evolving complex and a large number of cofactors. It forms dimeric complexes.

It localises to the plastid. The protein localises to the chloroplast thylakoid membrane. In terms of biological role, one of the components of the core complex of photosystem II (PSII). PSII is a light-driven water:plastoquinone oxidoreductase that uses light energy to abstract electrons from H(2)O, generating O(2) and a proton gradient subsequently used for ATP formation. It consists of a core antenna complex that captures photons, and an electron transfer chain that converts photonic excitation into a charge separation. The polypeptide is Photosystem II reaction center protein J (Morus indica (Mulberry)).